A 510-amino-acid chain; its full sequence is Chromosomal replication initiator protein DnaA (510 aa).

The domain I, interacts with DnaA modulators stretch occupies residues 1–87; sequence MSVELWQQCV…IGSRRSSAPR (87 aa). A domain II region spans residues 87–173; the sequence is RAAPNAPVSA…QVEGALKHTS (87 aa). A disordered region spans residues 140–160; the sequence is DSFDAMAEPASAPASSGRAEQ. The segment covering 144–157 has biased composition (low complexity); that stretch reads AMAEPASAPASSGR. Residues 174-390 form a domain III, AAA+ region region; the sequence is YLNRTFTFDT…GALKRVIAHS (217 aa). ATP is bound by residues Gly218, Gly220, Lys221, and Thr222. The domain IV, binds dsDNA stretch occupies residues 391–510; that stretch reads HFMGRDITIE…YKNLLRTLTT (120 aa).

This sequence belongs to the DnaA family. Oligomerizes as a right-handed, spiral filament on DNA at oriC.

It localises to the cytoplasm. Functionally, plays an essential role in the initiation and regulation of chromosomal replication. ATP-DnaA binds to the origin of replication (oriC) to initiate formation of the DNA replication initiation complex once per cell cycle. Binds the DnaA box (a 9 base pair repeat at the origin) and separates the double-stranded (ds)DNA. Forms a right-handed helical filament on oriC DNA; dsDNA binds to the exterior of the filament while single-stranded (ss)DNA is stabiized in the filament's interior. The ATP-DnaA-oriC complex binds and stabilizes one strand of the AT-rich DNA unwinding element (DUE), permitting loading of DNA polymerase. After initiation quickly degrades to an ADP-DnaA complex that is not apt for DNA replication. Binds acidic phospholipids. The sequence is that of Chromosomal replication initiator protein DnaA from Pseudomonas putida (strain GB-1).